The sequence spans 242 residues: uncharacterized protein (242 aa).

Positions 2–62 (EKAYKILSVQ…VEKPSVIFED (61 aa)) constitute an S4 RNA-binding domain. Aspartate 93 is an active-site residue.

This sequence belongs to the pseudouridine synthase RluA family.

It catalyses the reaction a uridine in RNA = a pseudouridine in RNA. This is an uncharacterized protein from Helicobacter pylori (strain ATCC 700392 / 26695) (Campylobacter pylori).